We begin with the raw amino-acid sequence, 712 residues long: WD repeat-containing protein 91 (712 aa).

Residues 148–180 (RRTNQVQEENEVLRQKLFALQAEIHRLKKEEQQ) are a coiled coil. S221 carries the post-translational modification Phosphoserine. Low complexity predominate over residues 230–243 (LLPQSKKSPSRLSP). The disordered stretch occupies residues 230–336 (LLPQSKKSPS…EAEPCPELHT (107 aa)). S253 and S258 each carry phosphoserine. Over residues 297-308 (RLQDHGKERKEL) the composition is skewed to basic and acidic residues. WD repeat units follow at residues 371 to 410 (EHHSSIMHCRVDCSGRRVASLDVDGVIKVWSFNPIMQTKA), 413 to 453 (ISKS…NLCE), 480 to 520 (AAPS…QQLQ), 525 to 564 (PEPIAINCTAFNHNGNLLVTGAADGVIRLFDMQQHECAMS), 567 to 606 (AHYGEVYSVEFSYDENTVYSIGEDGKFIQWNIHKSGLKVS), 629 to 667 (VQVPRGRLFAFDSEGNYMLTCSATGGVIYKLGGDEKVLE), and 674 to 712 (GHRAPVVTVDWSTAMDCGTCLTASMDGKIKLTTLLAHKA).

It belongs to the WD repeat WDR91 family. Interacts with WDR81; involved in early to late endosome cargo transport. Interacts with BECN1; negatively regulates the PI3 kinase/PI3K activity associated with endosomal membranes.

The protein localises to the early endosome membrane. It is found in the late endosome membrane. In terms of biological role, functions as a negative regulator of the PI3 kinase/PI3K activity associated with endosomal membranes via BECN1, a core subunit of the PI3K complex. By modifying the phosphatidylinositol 3-phosphate/PtdInsP3 content of endosomal membranes may regulate endosome fusion, recycling, sorting and early to late endosome transport. It is for instance, required for the delivery of cargos like BST2/tetherin from early to late endosome and thereby participates indirectly to their degradation by the lysosome. May play a role in meiosis. This is WD repeat-containing protein 91 from Pongo abelii (Sumatran orangutan).